Here is a 339-residue protein sequence, read N- to C-terminus: Ketol-acid reductoisomerase (NADP(+)) (339 aa).

Residues 1–182 enclose the KARI N-terminal Rossmann domain; it reads MRVYYDRDAD…GGGRSGIIET (182 aa). NADP(+)-binding positions include 24 to 27, lysine 48, serine 51, threonine 53, and 83 to 86; these read YGSQ and DELQ. Histidine 108 is an active-site residue. Position 134 (glycine 134) interacts with NADP(+). The 146-residue stretch at 183 to 328 folds into the KARI C-terminal knotted domain; that stretch reads NFREECETDL…AKLRGMMPWI (146 aa). Aspartate 191, glutamate 195, glutamate 227, and glutamate 231 together coordinate Mg(2+). Serine 252 provides a ligand contact to substrate.

This sequence belongs to the ketol-acid reductoisomerase family. The cofactor is Mg(2+).

It carries out the reaction (2R)-2,3-dihydroxy-3-methylbutanoate + NADP(+) = (2S)-2-acetolactate + NADPH + H(+). It catalyses the reaction (2R,3R)-2,3-dihydroxy-3-methylpentanoate + NADP(+) = (S)-2-ethyl-2-hydroxy-3-oxobutanoate + NADPH + H(+). It functions in the pathway amino-acid biosynthesis; L-isoleucine biosynthesis; L-isoleucine from 2-oxobutanoate: step 2/4. Its pathway is amino-acid biosynthesis; L-valine biosynthesis; L-valine from pyruvate: step 2/4. Its function is as follows. Involved in the biosynthesis of branched-chain amino acids (BCAA). Catalyzes an alkyl-migration followed by a ketol-acid reduction of (S)-2-acetolactate (S2AL) to yield (R)-2,3-dihydroxy-isovalerate. In the isomerase reaction, S2AL is rearranged via a Mg-dependent methyl migration to produce 3-hydroxy-3-methyl-2-ketobutyrate (HMKB). In the reductase reaction, this 2-ketoacid undergoes a metal-dependent reduction by NADPH to yield (R)-2,3-dihydroxy-isovalerate. The polypeptide is Ketol-acid reductoisomerase (NADP(+)) (Rhizobium rhizogenes (strain K84 / ATCC BAA-868) (Agrobacterium radiobacter)).